The following is a 375-amino-acid chain: Neuropeptide Y receptor type 4 (375 aa).

Over 1–39 the chain is Extracellular; that stretch reads MNTSHFLAPLFPGSLQGKNGTNPLDSPYNFSDGCQDSAE. N2, N19, and N29 each carry an N-linked (GlcNAc...) asparagine glycan. Residues 40 to 60 traverse the membrane as a helical segment; sequence LLAFIITTYSIETILGVLGNL. Residues 61 to 78 are Cytoplasmic-facing; it reads CLIFVTTRQKEKSNVTNL. A helical membrane pass occupies residues 79 to 99; that stretch reads LIANLAFSDFLMCLICQPLTV. Residues 100–116 lie on the Extracellular side of the membrane; that stretch reads TYTIMDYWIFGEVLCKM. C114 and C201 are disulfide-bonded. The helical transmembrane segment at 117–137 threads the bilayer; it reads LTFIQCMSVTVSILSLVLVAL. The Cytoplasmic segment spans residues 138–155; the sequence is ERHQLIINPTGWKPSIFQ. A helical transmembrane segment spans residues 156–176; that stretch reads AYLGIVVIWFVSCFLSLPFLA. At 177–211 the chain is on the extracellular side; it reads NSTLNDLFHYNHSKVVEFLEDKVVCFVSWSSDHHR. N-linked (GlcNAc...) asparagine glycosylation occurs at N187. A helical membrane pass occupies residues 212-232; it reads LIYTTFLLLFQYCIPLAFILV. Over 233-266 the chain is Cytoplasmic; it reads CYIRIYQRLQRQKHVFHAHACSSRAGQMKRINSM. Residues 267-287 form a helical membrane-spanning segment; sequence LMTMVTAFAVLWLPLHVFNTL. Residues 288–301 are Extracellular-facing; it reads EDWYQEAIPACHGN. Residues 302-322 form a helical membrane-spanning segment; that stretch reads LIFLMCHLLAMASTCVNPFIY. At 323–375 the chain is on the cytoplasmic side; the sequence is GFLNINFKKDIKALVLTCHCRSPRGESEHLPLSTVHTDLSKGSMRMGSKSNFI. A lipid anchor (S-palmitoyl cysteine) is attached at C340.

The protein belongs to the G-protein coupled receptor 1 family. In terms of tissue distribution, heart, detected in small intestine.

The protein localises to the cell membrane. G protein-coupled receptor for PPY/pancreatic polypeptide/PP that is negatively coupled to cAMP. Has much lower affinity for the NPY/neuropeptide Y and PYY/peptide YY. This is Neuropeptide Y receptor type 4 (Npy4r) from Mus musculus (Mouse).